The sequence spans 501 residues: Glycerol kinase (501 aa).

Threonine 12 lines the ADP pocket. Positions 12, 13, and 14 each coordinate ATP. Threonine 12 provides a ligand contact to sn-glycerol 3-phosphate. Arginine 16 is a binding site for ADP. Sn-glycerol 3-phosphate is bound by residues arginine 82, glutamate 83, tyrosine 135, and aspartate 244. Residues arginine 82, glutamate 83, tyrosine 135, aspartate 244, and glutamine 245 each coordinate glycerol. ADP-binding residues include threonine 266, glycine 309, glycine 409, and asparagine 413. Positions 266, 309, and 409 each coordinate ATP.

Belongs to the FGGY kinase family.

It carries out the reaction glycerol + ATP = sn-glycerol 3-phosphate + ADP + H(+). It participates in polyol metabolism; glycerol degradation via glycerol kinase pathway; sn-glycerol 3-phosphate from glycerol: step 1/1. Inhibited by fructose 1,6-bisphosphate (FBP). Key enzyme in the regulation of glycerol uptake and metabolism. Catalyzes the phosphorylation of glycerol to yield sn-glycerol 3-phosphate. This chain is Glycerol kinase, found in Coxiella burnetii (strain Dugway 5J108-111).